A 605-amino-acid polypeptide reads, in one-letter code: Threonine--tRNA ligase (605 aa).

The catalytic stretch occupies residues 195-497 (DHRKVGKELG…LIEEYAGDFP (303 aa)). 3 residues coordinate Zn(2+): cysteine 294, histidine 345, and histidine 474.

Belongs to the class-II aminoacyl-tRNA synthetase family. Homodimer. Zn(2+) serves as cofactor.

It localises to the cytoplasm. The catalysed reaction is tRNA(Thr) + L-threonine + ATP = L-threonyl-tRNA(Thr) + AMP + diphosphate + H(+). Functionally, catalyzes the attachment of threonine to tRNA(Thr) in a two-step reaction: L-threonine is first activated by ATP to form Thr-AMP and then transferred to the acceptor end of tRNA(Thr). Also edits incorrectly charged L-seryl-tRNA(Thr). In Thermosynechococcus vestitus (strain NIES-2133 / IAM M-273 / BP-1), this protein is Threonine--tRNA ligase.